The following is a 291-amino-acid chain: Undecaprenyl-diphosphatase (291 aa).

8 consecutive transmembrane segments (helical) span residues 1–21 (MFII…LTEF), 48–68 (SAFT…AWVF), 102–122 (LHVL…DDFI), 126–146 (LFSV…MIIA), 162–182 (INYF…WPGF), 203–223 (SDFT…LSLL), 236–256 (FYIL…KTFL), and 267–287 (FAIY…GFGI).

It belongs to the UppP family.

The protein localises to the cell membrane. It catalyses the reaction di-trans,octa-cis-undecaprenyl diphosphate + H2O = di-trans,octa-cis-undecaprenyl phosphate + phosphate + H(+). Functionally, catalyzes the dephosphorylation of undecaprenyl diphosphate (UPP). Confers resistance to bacitracin. The polypeptide is Undecaprenyl-diphosphatase (Staphylococcus aureus (strain MSSA476)).